The chain runs to 641 residues: Isomalto-dextranase (641 aa).

The tat-type signal signal peptide spans Met1–Gly39. Asp227 acts as the Nucleophile in catalysis. Asp288 acts as the Proton donor in catalysis. Positions Thr500–Asp640 constitute a CBM6 domain. The tract at residues Ser556–Asp588 is disordered. The segment covering Ala561 to Lys576 has biased composition (low complexity). Over residues Ala577–Thr586 the composition is skewed to basic and acidic residues.

The protein belongs to the glycosyl hydrolase 27 family. Post-translationally, predicted to be exported by the Tat system. The position of the signal peptide cleavage has been experimentally proven.

Its subcellular location is the secreted. The enzyme catalyses Hydrolysis of (1-&gt;6)-alpha-D-glucosidic linkages in polysaccharides, to remove successive isomaltose units from the non-reducing ends of the chains.. This Arthrobacter globiformis protein is Isomalto-dextranase (imd).